The chain runs to 288 residues: ATP synthase gamma chain 1 (288 aa).

Belongs to the ATPase gamma chain family. In terms of assembly, F-type ATPases have 2 components, CF(1) - the catalytic core - and CF(0) - the membrane proton channel. CF(1) has five subunits: alpha(3), beta(3), gamma(1), delta(1), epsilon(1). CF(0) has three main subunits: a, b and c.

The protein resides in the cell inner membrane. In terms of biological role, produces ATP from ADP in the presence of a proton gradient across the membrane. The gamma chain is believed to be important in regulating ATPase activity and the flow of protons through the CF(0) complex. This is ATP synthase gamma chain 1 from Photobacterium profundum (strain SS9).